The chain runs to 328 residues: Deoxynucleotidyltransferase terminal-interacting protein 1 (328 aa).

Disordered stretches follow at residues 1–30 (MGAT…GAAG) and 142–176 (ELPG…HVLS). Residues 12-22 (GPGGAERGGLE) show a composition bias toward gly residues. The segment at 56-147 (MTTSFTDPAI…RLAHELPGIK (92 aa)) is important for dimerization. Basic and acidic residues predominate over residues 142-158 (ELPGIKRGRQAEEESHR). Positions 158–172 (RGSPIPKKRKGRPPG) form a DNA-binding region, a.T hook. Ser-160 bears the Phosphoserine mark. Residues 163–169 (PKKRKGR) carry the Nuclear localization signal motif. The segment at 196–315 (REGPKWDPAR…MRKYMETLRT (120 aa)) is important for DNA and nucleosome binding. Residues 215–236 (GSRANKALGMGGTRGRIYIKHP) constitute a DNA-binding region (H-T-H motif).

Monomer and homodimer. A minor proportion may form homotrimers. Interacts with ZNF541. Interacts with the terminal deoxynucleotidyltransferase DNTT. Interacts with TRERF1. Identified in a histone deacetylase complex that contains DNTTIP1, HDAC1 and MIDEAS; this complex assembles into a tetramer that contains four copies of each protein chain. Component of a histone deacetylase complex containing DNTTIP1, ZNF541, HDAC1 and HDAC2. Identified in a complex with KCTD19, HDAC1, HDAC2 and ZNF541.

It is found in the nucleus. Functionally, increases DNTT terminal deoxynucleotidyltransferase activity (in vitro). Also acts as a transcriptional regulator, binding to the consensus sequence 5'-GNTGCATG-3' following an AT-tract. Associates with RAB20 promoter and positively regulates its transcription. Binds DNA and nucleosomes; may recruit HDAC1 complexes to nucleosomes or naked DNA. The polypeptide is Deoxynucleotidyltransferase terminal-interacting protein 1 (Dnttip1) (Mus musculus (Mouse)).